Reading from the N-terminus, the 653-residue chain is tRNA-guanine(15) transglycosylase (653 aa).

Residue Asp91 is the Nucleophile of the active site. Positions 126 and 193 each coordinate substrate. Residues Cys276, Cys278, and Cys281 each contribute to the Zn(2+) site. Positions 578–653 (AWRVAVNEES…QAVKTRKGGF (76 aa)) constitute a PUA domain.

This sequence belongs to the archaeosine tRNA-ribosyltransferase family. The cofactor is Zn(2+).

It carries out the reaction guanosine(15) in tRNA + 7-cyano-7-deazaguanine = 7-cyano-7-carbaguanosine(15) in tRNA + guanine. The protein operates within tRNA modification; archaeosine-tRNA biosynthesis. Exchanges the guanine residue with 7-cyano-7-deazaguanine (preQ0) at position 15 in the dihydrouridine loop (D-loop) of archaeal tRNAs. The polypeptide is tRNA-guanine(15) transglycosylase (Methanothermobacter thermautotrophicus (strain ATCC 29096 / DSM 1053 / JCM 10044 / NBRC 100330 / Delta H) (Methanobacterium thermoautotrophicum)).